A 341-amino-acid chain; its full sequence is Tryptophan--tRNA ligase (341 aa).

ATP is bound by residues 11 to 13 (RPT) and 19 to 20 (GH). Residues 12 to 20 (PTGKLHIGH) carry the 'HIGH' region motif. Residue Asp140 coordinates L-tryptophan. ATP-binding positions include 152-154 (GTD), Leu194, and 202-206 (KMSKS). A 'KMSKS' region motif is present at residues 202–206 (KMSKS).

Belongs to the class-I aminoacyl-tRNA synthetase family. Homodimer.

It is found in the cytoplasm. It catalyses the reaction tRNA(Trp) + L-tryptophan + ATP = L-tryptophyl-tRNA(Trp) + AMP + diphosphate + H(+). Functionally, catalyzes the attachment of tryptophan to tRNA(Trp). In Streptococcus agalactiae serotype III (strain NEM316), this protein is Tryptophan--tRNA ligase.